A 229-amino-acid chain; its full sequence is Endo-1,4-beta-xylanase 1 (229 aa).

The signal sequence occupies residues 1 to 19 (MVAFSSLICALTSIASTLA). Positions 20 to 51 (MPTGLEPESSVNVTERGMYDFVLGAHNDHRRR) are excised as a propeptide. Residue Asn-31 is glycosylated (N-linked (GlcNAc...) asparagine). One can recognise a GH11 domain in the interval 42 to 228 (LGAHNDHRRR…GSGSASQSVS (187 aa)). Tyr-117 serves as a coordination point for substrate. Residue Glu-126 is the Nucleophile of the active site. Substrate contacts are provided by Tyr-128, Arg-160, Pro-164, Gln-174, and Tyr-209. The active-site Proton donor is Glu-215.

It belongs to the glycosyl hydrolase 11 (cellulase G) family.

The protein localises to the secreted. It carries out the reaction Endohydrolysis of (1-&gt;4)-beta-D-xylosidic linkages in xylans.. Its pathway is glycan degradation; xylan degradation. In terms of biological role, glycoside hydrolase involved in the hydrolysis of xylan, a major plant cell wall hemicellulose made up of 1,4-beta-linked D-xylopyranose residues. Catalyzes the endohydrolysis of the main-chain 1,4-beta-glycosidic bonds connecting the xylose subunits yielding various xylooligosaccharides and xylose. The chain is Endo-1,4-beta-xylanase 1 from Hypocrea jecorina (strain QM6a) (Trichoderma reesei).